Reading from the N-terminus, the 108-residue chain is VQ motif-containing protein 10 (108 aa).

A VQ motif is present at residues 29–38 (FKTVVQELTG). The interval 65–85 (IGEDTRQLHGGGGGGGRMGTT) is disordered. The span at 73 to 82 (HGGGGGGGRM) shows a compositional bias: gly residues.

As to quaternary structure, interacts with WRKY25, WRKY26 and WRKY33.

The protein resides in the nucleus. Its function is as follows. May modulate WRKY transcription factor activities. The protein is VQ motif-containing protein 10 of Arabidopsis thaliana (Mouse-ear cress).